A 459-amino-acid chain; its full sequence is MAP kinase-interacting serine/threonine-protein kinase 2 (459 aa).

Residues 28–67 are disordered; it reads LDPAQHGDSDFSPQCEARPDMPSSQPIDIPDAKKRGRKKK. The Nuclear localization signal motif lies at 60–66; that stretch reads KKRGRKK. Ser74 bears the Phosphoserine mark. The Protein kinase domain maps to 84–368; the sequence is QLQEDVLGEG…AAQVLQHPWV (285 aa). ATP contacts are provided by residues 90-98 and Lys113; that span reads LGEGAHARV. A staurosporine-binding site is contributed by 160–162; it reads EKM. The active-site Proton acceptor is the Asp205. Staurosporine is bound at residue Glu209. 2 positions are modified to phosphothreonine: Thr244 and Thr249. Cys299, Cys311, and Cys314 together coordinate Zn(2+). Thr379 carries the post-translational modification Phosphothreonine. Phosphoserine occurs at positions 431 and 434. The MAP kinase binding motif lies at 438–442; the sequence is LAQRR. At Ser446 the chain carries Phosphoserine. Thr450 is modified (phosphothreonine).

This sequence belongs to the protein kinase superfamily. CAMK Ser/Thr protein kinase family. As to quaternary structure, monomer. Interacts with the C-terminal regions of EIF4G1 and EIF4G2; this interaction is promoted when MAPK pathways are repressed but repressed upon ERK proteins activation. Also binds to dephosphorylated MAPK3/ERK1 and MAPK1/ER2K. Interaction with phosphorylated MAPK3/ERK1 and MAPK1/ER2K protects it from dephosphorylation and inactivation. Interacts with ESR2 and EIF4E in the nucleus. Requires Mg(2+) as cofactor. It depends on Zn(2+) as a cofactor. Dual phosphorylation of Thr-244 and Thr-249 activates the kinase. Phosphorylation of Thr-379 activates the kinase. Phosphorylated upon arsenic trioxide As(2)O(3) treatment. Phosphorylated by MAPK1/ERK2, MAPK11 and MAPK14. Dephosphorylated by PP2A.

It localises to the cytoplasm. The protein localises to the nucleus. Its subcellular location is the PML body. The enzyme catalyses L-seryl-[protein] + ATP = O-phospho-L-seryl-[protein] + ADP + H(+). It carries out the reaction L-threonyl-[protein] + ATP = O-phospho-L-threonyl-[protein] + ADP + H(+). Inhibited by CGP57380 and staurosporine. Functionally, serine/threonine-protein kinase that phosphorylates SFPQ/PSF, HNRNPA1 and EIF4E. May play a role in the response to environmental stress and cytokines. Appears to regulate translation by phosphorylating EIF4E, thus increasing the affinity of this protein for the 7-methylguanosine-containing mRNA cap. Required for mediating PP2A-inhibition-induced EIF4E phosphorylation. Triggers EIF4E shuttling from cytoplasm to nucleus. Enhances the formation of EIF4F complex in pachytene spermatocytes, thus promoting mRNA translation during spermatogenesis. Displays a high basal kinase activity. Acts as a mediator of the suppressive effects of IFNgamma on hematopoiesis. Negative regulator for signals that control generation of arsenic trioxide As(2)O(3)-dependent apoptosis and anti-leukemic responses. Involved in anti-apoptotic signaling in response to serum withdrawal. The protein is MAP kinase-interacting serine/threonine-protein kinase 2 (Mknk2) of Rattus norvegicus (Rat).